Reading from the N-terminus, the 434-residue chain is GTPase Obg (434 aa).

One can recognise an Obg domain in the interval 1–158 (MFLDTAKIKV…RELQLELKIL (158 aa)). Positions 159-336 (ADVGLVGFPS…LLDATAELLD (178 aa)) constitute an OBG-type G domain. Residues 165 to 172 (GFPSVGKS), 190 to 194 (FTTIV), 212 to 215 (DLPG), 282 to 285 (NKMD), and 317 to 319 (SGL) each bind GTP. Mg(2+) is bound by residues S172 and T192. One can recognise an OCT domain in the interval 356–434 (GFDEEEKAFE…IGKFEFEFVD (79 aa)).

The protein belongs to the TRAFAC class OBG-HflX-like GTPase superfamily. OBG GTPase family. In terms of assembly, monomer. It depends on Mg(2+) as a cofactor.

It is found in the cytoplasm. In terms of biological role, an essential GTPase which binds GTP, GDP and possibly (p)ppGpp with moderate affinity, with high nucleotide exchange rates and a fairly low GTP hydrolysis rate. Plays a role in control of the cell cycle, stress response, ribosome biogenesis and in those bacteria that undergo differentiation, in morphogenesis control. This chain is GTPase Obg, found in Streptococcus pneumoniae (strain Hungary19A-6).